Consider the following 523-residue polypeptide: Apolipoprotein N-acyltransferase (523 aa).

7 consecutive transmembrane segments (helical) span residues 26–46, 49–66, 74–94, 109–129, 137–157, 185–205, and 212–232; these read LRFAAPLAALLGVMHTLAFAP, WWWLQILSLAGLAALVRQ, AWVGYAFGLGWFLSGIWWLYI, AAVLLFSAYLALHPALAAWLW, QLSGAASALVFGAAWLVSEWL, LVGVYGVVAIAATLAGLLCAA, and WLAGLAGVAVLAAGWPLHTIA. The CN hydrolase domain maps to 246–487; sequence LQGNVPQDVK…LGTLQADVQG (242 aa). E284 acts as the Proton acceptor in catalysis. K345 is an active-site residue. Catalysis depends on C395, which acts as the Nucleophile. Residues 494–514 form a helical membrane-spanning segment; it reads FVRTGNAPALGAGVLVLLAAL.

Belongs to the CN hydrolase family. Apolipoprotein N-acyltransferase subfamily.

It localises to the cell inner membrane. It carries out the reaction N-terminal S-1,2-diacyl-sn-glyceryl-L-cysteinyl-[lipoprotein] + a glycerophospholipid = N-acyl-S-1,2-diacyl-sn-glyceryl-L-cysteinyl-[lipoprotein] + a 2-acyl-sn-glycero-3-phospholipid + H(+). It functions in the pathway protein modification; lipoprotein biosynthesis (N-acyl transfer). Its function is as follows. Catalyzes the phospholipid dependent N-acylation of the N-terminal cysteine of apolipoprotein, the last step in lipoprotein maturation. This Ralstonia nicotianae (strain ATCC BAA-1114 / GMI1000) (Ralstonia solanacearum) protein is Apolipoprotein N-acyltransferase.